The chain runs to 241 residues: Uridylate kinase (241 aa).

15–18 (KMSG) lines the ATP pocket. Residues 23 to 28 (GAEGFG) form an involved in allosteric activation by GTP region. Residue Gly-57 coordinates UMP. 2 residues coordinate ATP: Gly-58 and Arg-62. Residues Asp-77 and 138 to 145 (TGNPLFTT) contribute to the UMP site. ATP contacts are provided by Thr-165, Phe-171, and Asp-174.

It belongs to the UMP kinase family. As to quaternary structure, homohexamer.

The protein resides in the cytoplasm. It catalyses the reaction UMP + ATP = UDP + ADP. Its pathway is pyrimidine metabolism; CTP biosynthesis via de novo pathway; UDP from UMP (UMPK route): step 1/1. With respect to regulation, allosterically activated by GTP. Inhibited by UTP. Catalyzes the reversible phosphorylation of UMP to UDP. In Blochmanniella pennsylvanica (strain BPEN), this protein is Uridylate kinase.